The chain runs to 432 residues: Putative D-alanyl-D-alanine carboxypeptidase (432 aa).

Residues 7–25 form a helical; Signal-anchor membrane-spanning segment; sequence ATVLLTFSLSAFAVEYPVL.

The protein belongs to the peptidase S12 family. YfeW subfamily.

Its subcellular location is the cell inner membrane. It catalyses the reaction Preferential cleavage: (Ac)2-L-Lys-D-Ala-|-D-Ala. Also transpeptidation of peptidyl-alanyl moieties that are N-acyl substituents of D-alanine.. In Salmonella typhimurium (strain LT2 / SGSC1412 / ATCC 700720), this protein is Putative D-alanyl-D-alanine carboxypeptidase.